Consider the following 92-residue polypeptide: Small ribosomal subunit protein bS18 (92 aa).

The segment at 1 to 22 (MADERAPQRSTSGPRKKRPFQR) is disordered.

Belongs to the bacterial ribosomal protein bS18 family. Part of the 30S ribosomal subunit. Forms a tight heterodimer with protein bS6.

Functionally, binds as a heterodimer with protein bS6 to the central domain of the 16S rRNA, where it helps stabilize the platform of the 30S subunit. This chain is Small ribosomal subunit protein bS18, found in Citrifermentans bemidjiense (strain ATCC BAA-1014 / DSM 16622 / JCM 12645 / Bem) (Geobacter bemidjiensis).